Reading from the N-terminus, the 422-residue chain is MLDAKYLRENLEEVEARLATRGSEVSLGRFRELDERRRALLTESESLKALKNSVSEAISKVKDKSQIQDKIAEMREVGVRIKGLDDELRGIEDELQMVLLTVPNVPHPTVPVGASEADNRQVRTWGEPPCFAFDPKPHWEIGEGLGILDFERGAKLTGARFTLYRGAGARLERALVNFMLDLHTERHNYLEMLPPFVVNRESMTGTGQLPKFEDDLFHLEGVDYFLIPTAEVPVTNIHRAEILKAADLPLSYTAYTPCFRKEAGSYGKDVRGLIRQHQFNKVELVKFVHPATSYDELEKLLSNAEEVLRQLGLAYRVVELCTGDMGFSAAKTYDIEVWLPGQETYREISSCSNFEDFQSRRASIRFREDEKSKPEFVHTLNGSGLAVGRTLVAILENYQQEDGSVVIPDVLRPYMGGLQKIG.

An L-serine-binding site is contributed by 229-231 (TAE). Residue 260–262 (RKE) participates in ATP binding. L-serine is bound at residue Glu283. 347-350 (EISS) contacts ATP. Ser383 serves as a coordination point for L-serine.

Belongs to the class-II aminoacyl-tRNA synthetase family. Type-1 seryl-tRNA synthetase subfamily. In terms of assembly, homodimer. The tRNA molecule binds across the dimer.

Its subcellular location is the cytoplasm. The enzyme catalyses tRNA(Ser) + L-serine + ATP = L-seryl-tRNA(Ser) + AMP + diphosphate + H(+). The catalysed reaction is tRNA(Sec) + L-serine + ATP = L-seryl-tRNA(Sec) + AMP + diphosphate + H(+). It participates in aminoacyl-tRNA biosynthesis; selenocysteinyl-tRNA(Sec) biosynthesis; L-seryl-tRNA(Sec) from L-serine and tRNA(Sec): step 1/1. Its function is as follows. Catalyzes the attachment of serine to tRNA(Ser). Is also able to aminoacylate tRNA(Sec) with serine, to form the misacylated tRNA L-seryl-tRNA(Sec), which will be further converted into selenocysteinyl-tRNA(Sec). The chain is Serine--tRNA ligase from Geobacter sulfurreducens (strain ATCC 51573 / DSM 12127 / PCA).